Here is a 258-residue protein sequence, read N- to C-terminus: Deoxyribose-phosphate aldolase (258 aa).

Asp-102 serves as the catalytic Proton donor/acceptor. Lys-165 acts as the Schiff-base intermediate with acetaldehyde in catalysis. The active-site Proton donor/acceptor is Lys-199.

It belongs to the DeoC/FbaB aldolase family. DeoC type 2 subfamily.

It is found in the cytoplasm. It carries out the reaction 2-deoxy-D-ribose 5-phosphate = D-glyceraldehyde 3-phosphate + acetaldehyde. It functions in the pathway carbohydrate degradation; 2-deoxy-D-ribose 1-phosphate degradation; D-glyceraldehyde 3-phosphate and acetaldehyde from 2-deoxy-alpha-D-ribose 1-phosphate: step 2/2. Catalyzes a reversible aldol reaction between acetaldehyde and D-glyceraldehyde 3-phosphate to generate 2-deoxy-D-ribose 5-phosphate. This Aliivibrio fischeri (strain ATCC 700601 / ES114) (Vibrio fischeri) protein is Deoxyribose-phosphate aldolase.